The sequence spans 445 residues: Histidinol dehydrogenase (445 aa).

Tyr138, Gln199, and Asn222 together coordinate NAD(+). Positions 245, 267, and 270 each coordinate substrate. Gln267 and His270 together coordinate Zn(2+). Active-site proton acceptor residues include Glu335 and His336. Residues His336, Asp369, Glu423, and His428 each coordinate substrate. Asp369 contacts Zn(2+). His428 lines the Zn(2+) pocket.

It belongs to the histidinol dehydrogenase family. The cofactor is Zn(2+).

The catalysed reaction is L-histidinol + 2 NAD(+) + H2O = L-histidine + 2 NADH + 3 H(+). It functions in the pathway amino-acid biosynthesis; L-histidine biosynthesis; L-histidine from 5-phospho-alpha-D-ribose 1-diphosphate: step 9/9. In terms of biological role, catalyzes the sequential NAD-dependent oxidations of L-histidinol to L-histidinaldehyde and then to L-histidine. This is Histidinol dehydrogenase from Burkholderia pseudomallei (strain 1710b).